Consider the following 317-residue polypeptide: tRNA-cytidine(32) 2-sulfurtransferase (317 aa).

Positions 46-51 (SGGKDS) match the PP-loop motif motif. [4Fe-4S] cluster contacts are provided by Cys-121, Cys-124, and Cys-212.

It belongs to the TtcA family. Homodimer. Requires Mg(2+) as cofactor. [4Fe-4S] cluster is required as a cofactor.

It is found in the cytoplasm. It catalyses the reaction cytidine(32) in tRNA + S-sulfanyl-L-cysteinyl-[cysteine desulfurase] + AH2 + ATP = 2-thiocytidine(32) in tRNA + L-cysteinyl-[cysteine desulfurase] + A + AMP + diphosphate + H(+). The protein operates within tRNA modification. Catalyzes the ATP-dependent 2-thiolation of cytidine in position 32 of tRNA, to form 2-thiocytidine (s(2)C32). The sulfur atoms are provided by the cysteine/cysteine desulfurase (IscS) system. In Shewanella loihica (strain ATCC BAA-1088 / PV-4), this protein is tRNA-cytidine(32) 2-sulfurtransferase.